The chain runs to 215 residues: Pyrrolidone-carboxylate peptidase (215 aa).

Active-site residues include Glu-80, Cys-143, and His-167.

The protein belongs to the peptidase C15 family. Homotetramer.

Its subcellular location is the cytoplasm. The catalysed reaction is Release of an N-terminal pyroglutamyl group from a polypeptide, the second amino acid generally not being Pro.. Its function is as follows. Removes 5-oxoproline from various penultimate amino acid residues except L-proline. This is Pyrrolidone-carboxylate peptidase from Bacillus cytotoxicus (strain DSM 22905 / CIP 110041 / 391-98 / NVH 391-98).